Reading from the N-terminus, the 272-residue chain is Phosphatidylglycerol--prolipoprotein diacylglyceryl transferase (272 aa).

A run of 7 helical transmembrane segments spans residues 17 to 37 (LQVH…WGLA), 55 to 75 (LVFY…VLFY), 90 to 110 (VWTG…AMLF), 125 to 145 (FIAP…FIGG), 174 to 194 (PSQI…LWWF), 202 to 222 (MAVS…MEFF), and 230 to 250 (GFIL…MLLI). Arg138 is an a 1,2-diacyl-sn-glycero-3-phospho-(1'-sn-glycerol) binding site.

It belongs to the Lgt family.

It localises to the cell inner membrane. It carries out the reaction L-cysteinyl-[prolipoprotein] + a 1,2-diacyl-sn-glycero-3-phospho-(1'-sn-glycerol) = an S-1,2-diacyl-sn-glyceryl-L-cysteinyl-[prolipoprotein] + sn-glycerol 1-phosphate + H(+). The protein operates within protein modification; lipoprotein biosynthesis (diacylglyceryl transfer). In terms of biological role, catalyzes the transfer of the diacylglyceryl group from phosphatidylglycerol to the sulfhydryl group of the N-terminal cysteine of a prolipoprotein, the first step in the formation of mature lipoproteins. This Acinetobacter baumannii (strain ACICU) protein is Phosphatidylglycerol--prolipoprotein diacylglyceryl transferase.